A 237-amino-acid polypeptide reads, in one-letter code: Uridylate kinase (237 aa).

12-15 (KLSG) lines the ATP pocket. Residues 20–25 (GAEGFG) form an involved in allosteric activation by GTP region. Gly-54 is a binding site for UMP. Residues Gly-55 and Arg-59 each coordinate ATP. Residues Asp-74 and 135 to 142 (TGSPFFTT) each bind UMP. Residues Thr-162, Tyr-168, and Asp-171 each contribute to the ATP site.

This sequence belongs to the UMP kinase family. Homohexamer.

The protein resides in the cytoplasm. It carries out the reaction UMP + ATP = UDP + ADP. Its pathway is pyrimidine metabolism; CTP biosynthesis via de novo pathway; UDP from UMP (UMPK route): step 1/1. With respect to regulation, allosterically activated by GTP. Inhibited by UTP. Functionally, catalyzes the reversible phosphorylation of UMP to UDP. The sequence is that of Uridylate kinase from Actinobacillus succinogenes (strain ATCC 55618 / DSM 22257 / CCUG 43843 / 130Z).